The primary structure comprises 131 residues: Leptin receptor overlapping transcript-like 1 (131 aa).

A run of 4 helical transmembrane segments spans residues 7–27 (LISL…GCAL), 32–52 (QYWP…YCIA), 69–89 (LAIF…VVFA), and 100–120 (ALVL…FLVF).

Belongs to the OB-RGRP/VPS55 family. Interacts with RAB13.

The protein resides in the membrane. Functionally, negatively regulates growth hormone (GH) receptor cell surface expression in liver. May play a role in liver resistance to GH during periods of reduced nutrient availability. The protein is Leptin receptor overlapping transcript-like 1 (Leprotl1) of Mus musculus (Mouse).